We begin with the raw amino-acid sequence, 276 residues long: Type 2 phosphatidylinositol 4,5-bisphosphate 4-phosphatase (276 aa).

A compositionally biased stretch (basic and acidic residues) spans 1–10; the sequence is MAADGIDERS. Residues 1 to 27 form a disordered region; sequence MAADGIDERSPLISPSSGNVTPTAPPY. The segment covering 13 to 27 has biased composition (polar residues); that stretch reads ISPSSGNVTPTAPPY. The active site involves Cys-106. The short motif at 106-112 is the CX5R motif element; sequence CKDISRR. Helical transmembrane passes span 211 to 231 and 246 to 266; these read CCTY…LTVG and WAVA…WGAI.

It localises to the late endosome membrane. Its subcellular location is the lysosome membrane. The catalysed reaction is a 1,2-diacyl-sn-glycero-3-phospho-(1D-myo-inositol-4,5-bisphosphate) + H2O = a 1,2-diacyl-sn-glycero-3-phospho-(1D-myo-inositol-5-phosphate) + phosphate. Catalyzes the hydrolysis of phosphatidylinositol-4,5-bisphosphate (PtdIns-4,5-P2) to phosphatidylinositol-4-phosphate (PtdIns-4-P). This is Type 2 phosphatidylinositol 4,5-bisphosphate 4-phosphatase (pip4p2) from Xenopus tropicalis (Western clawed frog).